Here is a 144-residue protein sequence, read N- to C-terminus: Small polypeptide DEVIL 15 (144 aa).

Asn8 carries an N-linked (GlcNAc...) asparagine glycan. The interval 22–63 (SSSSKPFFTRSFSTKTSSSPSSKSHFTRSFSTKPSSSSSSSD) is disordered. Residues 104 to 120 (ILSKKGASVTGKCFKVA) traverse the membrane as a helical segment. A required for DVL/RTFL small polypeptide activity region spans residues 111 to 142 (SVTGKCFKVAKEHKSRFYIIKRCVLMLVCWHK).

Belongs to the DVL/RTFL small polypeptides family.

Its subcellular location is the cell membrane. Small polypeptide acting as a regulatory molecule which coordinates cellular responses required for differentiation, growth and development, probably by restricting polar cell proliferation in lateral organs and coordinating socket cell recruitment and differentiation at trichome sites. This is Small polypeptide DEVIL 15 from Arabidopsis thaliana (Mouse-ear cress).